An 808-amino-acid polypeptide reads, in one-letter code: Phenylalanine--tRNA ligase beta subunit (808 aa).

Residues 40-155 (NQGATGVVVG…DDVEIGSDAL (116 aa)) form the tRNA-binding domain. One can recognise a B5 domain in the interval 409–484 (IEEPVVSLNL…RLYGYDNIPT (76 aa)). Residues D462, D468, E471, and E472 each coordinate Mg(2+). The FDX-ACB domain occupies 714-807 (PRFPAISRDI…LEASTGAVLR (94 aa)).

It belongs to the phenylalanyl-tRNA synthetase beta subunit family. Type 1 subfamily. As to quaternary structure, tetramer of two alpha and two beta subunits. Mg(2+) serves as cofactor.

It localises to the cytoplasm. The catalysed reaction is tRNA(Phe) + L-phenylalanine + ATP = L-phenylalanyl-tRNA(Phe) + AMP + diphosphate + H(+). This chain is Phenylalanine--tRNA ligase beta subunit (pheT), found in Halalkalibacterium halodurans (strain ATCC BAA-125 / DSM 18197 / FERM 7344 / JCM 9153 / C-125) (Bacillus halodurans).